Consider the following 257-residue polypeptide: 1-(5-phosphoribosyl)-5-[(5-phosphoribosylamino)methylideneamino] imidazole-4-carboxamide isomerase (257 aa).

The Proton acceptor role is filled by Asp-8. The active-site Proton donor is the Asp-129.

The protein belongs to the HisA/HisF family.

Its subcellular location is the cytoplasm. It carries out the reaction 1-(5-phospho-beta-D-ribosyl)-5-[(5-phospho-beta-D-ribosylamino)methylideneamino]imidazole-4-carboxamide = 5-[(5-phospho-1-deoxy-D-ribulos-1-ylimino)methylamino]-1-(5-phospho-beta-D-ribosyl)imidazole-4-carboxamide. Its pathway is amino-acid biosynthesis; L-histidine biosynthesis; L-histidine from 5-phospho-alpha-D-ribose 1-diphosphate: step 4/9. The chain is 1-(5-phosphoribosyl)-5-[(5-phosphoribosylamino)methylideneamino] imidazole-4-carboxamide isomerase from Thermosynechococcus vestitus (strain NIES-2133 / IAM M-273 / BP-1).